Here is a 418-residue protein sequence, read N- to C-terminus: 26S proteasome regulatory subunit 6B (418 aa).

Met1 is subject to N-acetylmethionine. Ser21 bears the Phosphoserine mark. Thr25 bears the Phosphothreonine mark. Ser28 carries the post-translational modification Phosphoserine. 206-213 is a binding site for ATP; that stretch reads GPPGCGKT. N6-acetyllysine occurs at positions 397 and 401.

Belongs to the AAA ATPase family. In terms of assembly, component of the 19S proteasome regulatory particle complex. The 26S proteasome consists of a 20S core particle (CP) and two 19S regulatory subunits (RP). The regulatory particle is made of a lid composed of 9 subunits, a base containing 6 ATPases including PSMC4 and few additional components. Interacts with NR1I3. Interacts with PAAF1. Interacts with TRIM5. Interacts with ZFAND1.

The protein resides in the cytoplasm. Its subcellular location is the nucleus. Its function is as follows. Component of the 26S proteasome, a multiprotein complex involved in the ATP-dependent degradation of ubiquitinated proteins. This complex plays a key role in the maintenance of protein homeostasis by removing misfolded or damaged proteins, which could impair cellular functions, and by removing proteins whose functions are no longer required. Therefore, the proteasome participates in numerous cellular processes, including cell cycle progression, apoptosis, or DNA damage repair. PSMC4 belongs to the heterohexameric ring of AAA (ATPases associated with diverse cellular activities) proteins that unfolds ubiquitinated target proteins that are concurrently translocated into a proteolytic chamber and degraded into peptides. This Bos taurus (Bovine) protein is 26S proteasome regulatory subunit 6B (PSMC4).